The primary structure comprises 131 residues: D-ribose pyranase (131 aa).

Residue His-20 is the Proton donor of the active site. Residues Asp-28, His-98, and Tyr-120–Asn-122 each bind substrate.

This sequence belongs to the RbsD / FucU family. RbsD subfamily. As to quaternary structure, homodecamer.

Its subcellular location is the cytoplasm. It carries out the reaction beta-D-ribopyranose = beta-D-ribofuranose. The protein operates within carbohydrate metabolism; D-ribose degradation; D-ribose 5-phosphate from beta-D-ribopyranose: step 1/2. Its function is as follows. Catalyzes the interconversion of beta-pyran and beta-furan forms of D-ribose. The protein is D-ribose pyranase of Bacillus mycoides (strain KBAB4) (Bacillus weihenstephanensis).